A 114-amino-acid chain; its full sequence is Large ribosomal subunit protein bL17 (114 aa).

The protein belongs to the bacterial ribosomal protein bL17 family. As to quaternary structure, part of the 50S ribosomal subunit. Contacts protein L32.

The chain is Large ribosomal subunit protein bL17 from Clostridium acetobutylicum (strain ATCC 824 / DSM 792 / JCM 1419 / IAM 19013 / LMG 5710 / NBRC 13948 / NRRL B-527 / VKM B-1787 / 2291 / W).